Consider the following 117-residue polypeptide: Holo-[acyl-carrier-protein] synthase (117 aa).

Residues Asp8 and Glu58 each contribute to the Mg(2+) site.

Belongs to the P-Pant transferase superfamily. AcpS family. The cofactor is Mg(2+).

Its subcellular location is the cytoplasm. The catalysed reaction is apo-[ACP] + CoA = holo-[ACP] + adenosine 3',5'-bisphosphate + H(+). Transfers the 4'-phosphopantetheine moiety from coenzyme A to a Ser of acyl-carrier-protein. The polypeptide is Holo-[acyl-carrier-protein] synthase (Latilactobacillus sakei subsp. sakei (strain 23K) (Lactobacillus sakei subsp. sakei)).